Reading from the N-terminus, the 712-residue chain is Polyribonucleotide nucleotidyltransferase (712 aa).

The Mg(2+) site is built by aspartate 484 and aspartate 490. The region spanning 550-609 (PKYKTMDVNPEKIRVLIGPGGKNIKAIIEETGSDVEIQDSGVVNIFAPDTPTLDKTIKLI) is the KH domain. The S1 motif domain maps to 619–686 (GEVYDGIVKD…KGGKYSLSRK (68 aa)).

Belongs to the polyribonucleotide nucleotidyltransferase family. It depends on Mg(2+) as a cofactor.

The protein resides in the cytoplasm. It catalyses the reaction RNA(n+1) + phosphate = RNA(n) + a ribonucleoside 5'-diphosphate. In terms of biological role, involved in mRNA degradation. Catalyzes the phosphorolysis of single-stranded polyribonucleotides processively in the 3'- to 5'-direction. The polypeptide is Polyribonucleotide nucleotidyltransferase (Brachyspira hyodysenteriae (strain ATCC 49526 / WA1)).